We begin with the raw amino-acid sequence, 89 residues long: Small ribosomal subunit protein uS15 (89 aa).

The disordered stretch occupies residues 1–23; sequence MSLGTEEKQNLINTHQVHPTDTG. Residues 10 to 23 show a composition bias toward polar residues; that stretch reads NLINTHQVHPTDTG.

It belongs to the universal ribosomal protein uS15 family. As to quaternary structure, part of the 30S ribosomal subunit. Forms a bridge to the 50S subunit in the 70S ribosome, contacting the 23S rRNA.

In terms of biological role, one of the primary rRNA binding proteins, it binds directly to 16S rRNA where it helps nucleate assembly of the platform of the 30S subunit by binding and bridging several RNA helices of the 16S rRNA. Forms an intersubunit bridge (bridge B4) with the 23S rRNA of the 50S subunit in the ribosome. The chain is Small ribosomal subunit protein uS15 from Prochlorococcus marinus (strain NATL2A).